The following is a 326-amino-acid chain: Cyclin-dependent kinase 1 (326 aa).

The 291-residue stretch at 16–306 folds into the Protein kinase domain; it reads FTKLEKIGEG…SKKALHHPYF (291 aa). Residues 22–30 and lysine 45 each bind ATP; that span reads IGEGTYGVV. Aspartate 140 acts as the Proton acceptor in catalysis.

It belongs to the protein kinase superfamily. CMGC Ser/Thr protein kinase family. CDC2/CDKX subfamily. In terms of assembly, forms a stable but non-covalent complex with a regulatory subunit and with a cyclin. Interacts with cks-1.

It is found in the nucleus. The protein resides in the cytoplasm. Its subcellular location is the cytoskeleton. It localises to the microtubule organizing center. The protein localises to the centrosome. The catalysed reaction is L-seryl-[protein] + ATP = O-phospho-L-seryl-[protein] + ADP + H(+). It catalyses the reaction L-threonyl-[protein] + ATP = O-phospho-L-threonyl-[protein] + ADP + H(+). The enzyme catalyses [DNA-directed RNA polymerase] + ATP = phospho-[DNA-directed RNA polymerase] + ADP + H(+). Phosphorylation both activates and inactivates the enzyme depending on the site of phosphorylation. Its function is as follows. Plays a key role in the control of the eukaryotic cell cycle. Required for entry into S-phase and mitosis. Acts as a component of the kinase complex that phosphorylates the repetitive C-terminus of RNA polymerase II. May function in concert with npp-16 to arrest prophase blastomeres in response to anoxia. In Caenorhabditis briggsae, this protein is Cyclin-dependent kinase 1.